Consider the following 259-residue polypeptide: Steroidogenic acute regulatory-like protein 1 (259 aa).

An N-terminal signal peptide occupies residues 1–20 (MTLLPFTCLILLYSLGSVMS). One can recognise an START domain in the interval 43–254 (YATALKTCGE…NRRHFQNLKA (212 aa)).

The polypeptide is Steroidogenic acute regulatory-like protein 1 (strl-1) (Caenorhabditis elegans).